The following is a 738-amino-acid chain: Ethylene receptor (738 aa).

Transmembrane regions (helical) follow at residues 23 to 43 (ISDF…IYFV), 54 to 74 (VLVQ…INLW), and 92 to 112 (VLTA…IPDL). Cu cation is bound by residues cysteine 65 and histidine 69. Positions 158–307 (DRHTILKTTL…VVADQVAVAL (150 aa)) constitute a GAF domain. Positions 350–589 (VMNHEMRTPM…IFIVKLGFAE (240 aa)) constitute a Histidine kinase domain. Histidine 353 is modified (phosphohistidine; by autocatalysis). The Response regulatory domain occupies 612-729 (PGLKVLVMDD…KMRSVLSELL (118 aa)). Aspartate 660 is modified (4-aspartylphosphate).

This sequence belongs to the ethylene receptor family. As to quaternary structure, homodimer; disulfide-linked. The cofactor is Cu cation. Activation probably requires a transfer of a phosphate group between a His in the transmitter domain and an Asp of the receiver domain.

It localises to the endoplasmic reticulum membrane. It catalyses the reaction ATP + protein L-histidine = ADP + protein N-phospho-L-histidine.. Its function is as follows. May act early in the ethylene signal transduction pathway, possibly as an ethylene receptor, or as a regulator of the pathway. The protein is Ethylene receptor (ETR1) of Prunus persica (Peach).